Consider the following 201-residue polypeptide: MAKRVTGPEIEKLIQLLAKVPGLGPRSARRAALHLIKKREQLMGPLALAMGEAHAKVKICSCCGNVDTIDPCTVCTDERRDQSMIIVVEDVSDLWALERAGAMNVAYHVLGGTLSPLDGVGPDDLNIKGLIDRVAKGGVREIIIAVNATVEGQTTAHYITDHLAGLGVKTTRLAHGVPVGGELDYLDEGTLSAALRARTLI.

The C4-type zinc finger occupies 60 to 75; that stretch reads CSCCGNVDTIDPCTVC. The Toprim domain occupies 83 to 178; it reads SMIIVVEDVS…KTTRLAHGVP (96 aa).

This sequence belongs to the RecR family.

Its function is as follows. May play a role in DNA repair. It seems to be involved in an RecBC-independent recombinational process of DNA repair. It may act with RecF and RecO. In Allorhizobium ampelinum (strain ATCC BAA-846 / DSM 112012 / S4) (Agrobacterium vitis (strain S4)), this protein is Recombination protein RecR.